The chain runs to 219 residues: ATP-dependent dethiobiotin synthetase BioD (219 aa).

12 to 17 provides a ligand contact to ATP; the sequence is EVGKTY. Threonine 16 contacts Mg(2+). Lysine 37 is an active-site residue. Serine 41 serves as a coordination point for substrate. ATP is bound by residues aspartate 52, 114–117, and 174–175; these read EGAG and NC. Aspartate 52 and glutamate 114 together coordinate Mg(2+).

Belongs to the dethiobiotin synthetase family. In terms of assembly, homodimer. Mg(2+) is required as a cofactor.

The protein resides in the cytoplasm. The enzyme catalyses (7R,8S)-7,8-diammoniononanoate + CO2 + ATP = (4R,5S)-dethiobiotin + ADP + phosphate + 3 H(+). It functions in the pathway cofactor biosynthesis; biotin biosynthesis; biotin from 7,8-diaminononanoate: step 1/2. Functionally, catalyzes a mechanistically unusual reaction, the ATP-dependent insertion of CO2 between the N7 and N8 nitrogen atoms of 7,8-diaminopelargonic acid (DAPA, also called 7,8-diammoniononanoate) to form a ureido ring. This chain is ATP-dependent dethiobiotin synthetase BioD, found in Francisella tularensis subsp. holarctica (strain FTNF002-00 / FTA).